A 196-amino-acid chain; its full sequence is ATP-dependent Clp protease proteolytic subunit (196 aa).

The Nucleophile role is filled by Ser96. His121 is a catalytic residue.

The protein belongs to the peptidase S14 family. Fourteen ClpP subunits assemble into 2 heptameric rings which stack back to back to give a disk-like structure with a central cavity, resembling the structure of eukaryotic proteasomes.

Its subcellular location is the cytoplasm. The enzyme catalyses Hydrolysis of proteins to small peptides in the presence of ATP and magnesium. alpha-casein is the usual test substrate. In the absence of ATP, only oligopeptides shorter than five residues are hydrolyzed (such as succinyl-Leu-Tyr-|-NHMec, and Leu-Tyr-Leu-|-Tyr-Trp, in which cleavage of the -Tyr-|-Leu- and -Tyr-|-Trp bonds also occurs).. Functionally, cleaves peptides in various proteins in a process that requires ATP hydrolysis. Has a chymotrypsin-like activity. Plays a major role in the degradation of misfolded proteins. The chain is ATP-dependent Clp protease proteolytic subunit from Streptococcus pneumoniae (strain P1031).